We begin with the raw amino-acid sequence, 566 residues long: 5'-AMP-activated protein kinase subunit gamma-2 (566 aa).

Positions 1–198 are disordered; that stretch reads MGSAAMDTKK…SRIYASSSPP (198 aa). Positions 15 to 25 are enriched in low complexity; the sequence is SSPGGSSGKKN. The span at 54–64 shows a compositional bias: basic and acidic residues; that stretch reads NSEKHSSRKVD. Phosphoserine occurs at positions 65, 71, 73, 90, 138, 143, 158, 161, and 162. 2 stretches are compositionally biased toward low complexity: residues 132-144 and 156-172; these read KESSPNSNPSTSP and TSSVSSSPSTPTQVTKQ. T165 is subject to Phosphothreonine. Basic and acidic residues predominate over residues 180 to 189; that stretch reads YKQEPERPES. A Phosphoserine modification is found at S196. CBS domains follow at residues 272 to 332, 354 to 412, and 427 to 489; these read PTSS…KSPM, TFKP…MSDM, and IGTY…NLDI. Residues R299, 314 to 319, V359, 380 to 381, and K399 each bind ADP; these read MLTITD and HR. AMP is bound by residues R299, 314–319, V359, H380, 380–381, K399, T429, A434, 455–456, 471–474, R498, H527, 527–528, and 543–546; these read MLTITD, HR, SA, SKFD, and SLSD. ATP-binding positions include R299, 314-319, V359, 380-381, R381, and K399; these read MLTITD and HR. The AMPK pseudosubstrate signature appears at 367-388; it reads LFDAVYSLIKNKIHRLPVIDPI. Residues 471–474, R498, and 527–528 contribute to the ADP site; these read SKFD and HR. Residues 471-474, R498, and 527-528 each bind ATP; these read SKFD and HR. Residues 501–559 form the CBS 4 domain; the sequence is YFEGVVKCSKLETLETIVDRIVRAEVHRLVVVNEADSIVGIISLSDILQALILTPAGAK.

The protein belongs to the 5'-AMP-activated protein kinase gamma subunit family. AMPK is a heterotrimer of an alpha catalytic subunit (PRKAA1 or PRKAA2), a beta (PRKAB1 or PRKAB2) and a gamma non-catalytic subunits (PRKAG1, PRKAG2 or PRKAG3). Interacts with FNIP1 and FNIP2. Phosphorylated by ULK1; leading to negatively regulate AMPK activity and suggesting the existence of a regulatory feedback loop between ULK1 and AMPK. Post-translationally, glycosylated; O-GlcNAcylated by OGT, promoting the AMP-activated protein kinase (AMPK) activity.

AMP/ATP-binding subunit of AMP-activated protein kinase (AMPK), an energy sensor protein kinase that plays a key role in regulating cellular energy metabolism. In response to reduction of intracellular ATP levels, AMPK activates energy-producing pathways and inhibits energy-consuming processes: inhibits protein, carbohydrate and lipid biosynthesis, as well as cell growth and proliferation. AMPK acts via direct phosphorylation of metabolic enzymes, and by longer-term effects via phosphorylation of transcription regulators. Also acts as a regulator of cellular polarity by remodeling the actin cytoskeleton; probably by indirectly activating myosin. Gamma non-catalytic subunit mediates binding to AMP, ADP and ATP, leading to activate or inhibit AMPK: AMP-binding results in allosteric activation of alpha catalytic subunit (PRKAA1 or PRKAA2) both by inducing phosphorylation and preventing dephosphorylation of catalytic subunits. ADP also stimulates phosphorylation, without stimulating already phosphorylated catalytic subunit. ATP promotes dephosphorylation of catalytic subunit, rendering the AMPK enzyme inactive. This Mus musculus (Mouse) protein is 5'-AMP-activated protein kinase subunit gamma-2 (Prkag2).